Here is a 45-residue protein sequence, read N- to C-terminus: uncharacterized protein (45 aa).

This is an uncharacterized protein from Acidianus two-tailed virus (ATV).